The chain runs to 417 residues: Serine hydroxymethyltransferase (417 aa).

(6S)-5,6,7,8-tetrahydrofolate contacts are provided by residues leucine 112 and 116 to 118; that span reads GHL. N6-(pyridoxal phosphate)lysine is present on lysine 221. Glutamate 247 contacts (6S)-5,6,7,8-tetrahydrofolate.

This sequence belongs to the SHMT family. Homodimer. Pyridoxal 5'-phosphate serves as cofactor.

The protein localises to the cytoplasm. It carries out the reaction (6R)-5,10-methylene-5,6,7,8-tetrahydrofolate + glycine + H2O = (6S)-5,6,7,8-tetrahydrofolate + L-serine. It participates in one-carbon metabolism; tetrahydrofolate interconversion. It functions in the pathway amino-acid biosynthesis; glycine biosynthesis; glycine from L-serine: step 1/1. Catalyzes the reversible interconversion of serine and glycine with tetrahydrofolate (THF) serving as the one-carbon carrier. This reaction serves as the major source of one-carbon groups required for the biosynthesis of purines, thymidylate, methionine, and other important biomolecules. Also exhibits THF-independent aldolase activity toward beta-hydroxyamino acids, producing glycine and aldehydes, via a retro-aldol mechanism. In Borreliella afzelii (strain PKo) (Borrelia afzelii), this protein is Serine hydroxymethyltransferase.